Here is a 232-residue protein sequence, read N- to C-terminus: Venom allergen 5 (232 aa).

The signal sequence occupies residues 1–23; that stretch reads MEQIKYLLIGIIFSSAISSSLQC. Intrachain disulfides connect C28–C43, C54–C119, and C198–C215. The SCP domain occupies 71-217; sequence LQLHNELRAK…FYTTMVACNY (147 aa).

It belongs to the CRISP family. Venom allergen 5-like subfamily. Expressed by the venom gland.

Its subcellular location is the secreted. In Microctonus hyperodae (Parasitoid wasp), this protein is Venom allergen 5.